A 612-amino-acid polypeptide reads, in one-letter code: Serine/threonine-protein kinase Nek1 (612 aa).

Positions 4 to 258 (YEFLEQIGKG…ASDLLRHPHL (255 aa)) constitute a Protein kinase domain. ATP contacts are provided by residues 10-18 (IGKGSFGSA) and lysine 33. The Proton acceptor role is filled by aspartate 129. Positions 503-513 (ISDGSSSSDQN) are enriched in polar residues. The interval 503 to 534 (ISDGSSSSDQNATAGASSHTTSSSSRRCRFDP) is disordered. A compositionally biased stretch (low complexity) spans 514 to 527 (ATAGASSHTTSSSS).

This sequence belongs to the protein kinase superfamily. NEK Ser/Thr protein kinase family. NIMA subfamily.

It catalyses the reaction L-seryl-[protein] + ATP = O-phospho-L-seryl-[protein] + ADP + H(+). It carries out the reaction L-threonyl-[protein] + ATP = O-phospho-L-threonyl-[protein] + ADP + H(+). In terms of biological role, may be involved in plant development processes. In Arabidopsis thaliana (Mouse-ear cress), this protein is Serine/threonine-protein kinase Nek1 (NEK1).